Consider the following 652-residue polypeptide: tRNA 5-methylaminomethyl-2-thiouridine biosynthesis bifunctional protein MnmC (652 aa).

Residues 1–235 (MPDRLVPATL…EPALRVGEYA (235 aa)) are tRNA (mnm(5)s(2)U34)-methyltransferase. An FAD-dependent cmnm(5)s(2)U34 oxidoreductase region spans residues 259 to 652 (IGAGLAGCAV…IRALRGRQIG (394 aa)).

It in the N-terminal section; belongs to the methyltransferase superfamily. tRNA (mnm(5)s(2)U34)-methyltransferase family. In the C-terminal section; belongs to the DAO family. Requires FAD as cofactor.

The protein resides in the cytoplasm. It carries out the reaction 5-aminomethyl-2-thiouridine(34) in tRNA + S-adenosyl-L-methionine = 5-methylaminomethyl-2-thiouridine(34) in tRNA + S-adenosyl-L-homocysteine + H(+). Functionally, catalyzes the last two steps in the biosynthesis of 5-methylaminomethyl-2-thiouridine (mnm(5)s(2)U) at the wobble position (U34) in tRNA. Catalyzes the FAD-dependent demodification of cmnm(5)s(2)U34 to nm(5)s(2)U34, followed by the transfer of a methyl group from S-adenosyl-L-methionine to nm(5)s(2)U34, to form mnm(5)s(2)U34. The protein is tRNA 5-methylaminomethyl-2-thiouridine biosynthesis bifunctional protein MnmC of Burkholderia ambifaria (strain MC40-6).